Consider the following 141-residue polypeptide: Venom protein family 1 protein 1 (141 aa).

A signal peptide spans 1–17 (MKSFIVVLCCLFAITYG). Residues cysteine 62 and cysteine 139 are joined by a disulfide bond.

It belongs to the insect vpf1 family. Expressed by the venom gland (posterior main gland) (at protein level).

It is found in the secreted. The protein is Venom protein family 1 protein 1 of Platymeris rhadamanthus (Red spot assassin bug).